We begin with the raw amino-acid sequence, 825 residues long: Zinc finger protein 229 (825 aa).

The disordered stretch occupies residues 1 to 26 (METLTSRHEKRALHSQASAISQDREE). Residues 34 to 108 (LSFKDVAVVF…SHKELSSCKI (75 aa)) enclose the KRAB domain. The C2H2-type 1; degenerate zinc-finger motif lies at 291 to 315 (KLCQYDEFSEGLRHSAHLNRHQRVP). C2H2-type zinc fingers lie at residues 349 to 371 (YRCD…QGVH), 377 to 399 (YKCE…QRVH), 405 to 427 (YKCS…QRLH), 433 to 455 (YTCS…QHIH), 461 to 483 (YSCG…QKTH), 489 to 511 (YQCD…QRVH), and 517 to 539 (YKCN…QRLH). Lys-543 is covalently cross-linked (Glycyl lysine isopeptide (Lys-Gly) (interchain with G-Cter in SUMO2)). 10 consecutive C2H2-type zinc fingers follow at residues 545–566 (YKCE…QRVH), 572–594 (YKCS…QRVH), 600–622 (YVCD…QRVH), 628–650 (YKCA…QRVH), 656–678 (YRCQ…QRVH), 684–706 (YTCD…QRLH), 712–734 (YTCC…KRVH), 740–762 (YRCH…QRVH), 768–790 (YKCE…QRVH), and 796–818 (YTCG…QRVH).

This sequence belongs to the krueppel C2H2-type zinc-finger protein family.

It localises to the nucleus. In terms of biological role, may be involved in transcriptional regulation. The protein is Zinc finger protein 229 of Homo sapiens (Human).